The primary structure comprises 160 residues: Thebaine synthase 2 (160 aa).

Position 74 (Ser-74) interacts with thebaine. The active-site Proton acceptor is His-89. Residue Thr-105 participates in thebaine binding.

It belongs to the MLP family. In terms of assembly, homodimer (allosteric) and oligomers. In terms of tissue distribution, expressed in poppy latex.

The enzyme catalyses (7S)-O-acetylsalutaridinol = thebaine + acetate + H(+). It participates in alkaloid biosynthesis; morphine biosynthesis. Its activity is regulated as follows. Slightly inhibited by salutaridine and (7S)-salutaridinol. Functionally, catalyzes the formation of thebaine from (7S)-salutaridinol 7-O-acetate at the expense of labile hydroxylated by-products, which are preferentially produced by spontaneous allylic elimination. No visible activity toward (7S)-salutaridinol (at pH 7). The chain is Thebaine synthase 2 from Papaver somniferum (Opium poppy).